Consider the following 354-residue polypeptide: Arginase-2, mitochondrial (354 aa).

The N-terminal 22 residues, 1–22, are a transit peptide targeting the mitochondrion; the sequence is MFLRSSASRLLHGQIPCVLTRS. The Mn(2+) site is built by histidine 120, aspartate 143, histidine 145, and aspartate 147. Substrate contacts are provided by residues 145–149, 156–158, and glutamate 202; these read HADIN and SGN. Residues aspartate 251 and aspartate 253 each coordinate Mn(2+). Residues threonine 265 and glutamate 296 each coordinate substrate.

The protein belongs to the arginase family. As to quaternary structure, homotrimer. Mn(2+) is required as a cofactor.

It is found in the mitochondrion. It carries out the reaction L-arginine + H2O = urea + L-ornithine. Its pathway is nitrogen metabolism; urea cycle; L-ornithine and urea from L-arginine: step 1/1. Its function is as follows. May play a role in the regulation of extra-urea cycle arginine metabolism and also in down-regulation of nitric oxide synthesis. Extrahepatic arginase functions to regulate L-arginine bioavailability to nitric oxid synthase (NOS). Arginine metabolism is a critical regulator of innate and adaptive immune responses. Seems to be involved in negative regulation of the survival capacity of activated CD4(+) and CD8(+) T cells. May suppress inflammation-related signaling in asthmatic airway epithelium. May contribute to the immune evasion of H.pylori by restricting M1 macrophage activation and polyamine metabolism. May play a role in promoting prenatal immune suppression. Regulates RPS6KB1 signaling, which promotes endothelial cell senescence and inflammation and implicates NOS3/eNOS dysfunction. Can inhibit endothelial autophagy independently of its enzymatic activity implicating mTORC2 signaling. Involved in vascular smooth muscle cell senescence and apoptosis independently of its enzymatic activity. The chain is Arginase-2, mitochondrial (Arg2) from Mus musculus (Mouse).